The primary structure comprises 567 residues: Oxygen-dependent choline dehydrogenase (567 aa).

4–33 (DYIIIGAGSAGNVLAARLTEDADVTVLLLE) serves as a coordination point for FAD. Histidine 473 (proton acceptor) is an active-site residue.

It belongs to the GMC oxidoreductase family. FAD is required as a cofactor.

The enzyme catalyses choline + A = betaine aldehyde + AH2. It carries out the reaction betaine aldehyde + NAD(+) + H2O = glycine betaine + NADH + 2 H(+). It participates in amine and polyamine biosynthesis; betaine biosynthesis via choline pathway; betaine aldehyde from choline (cytochrome c reductase route): step 1/1. Functionally, involved in the biosynthesis of the osmoprotectant glycine betaine. Catalyzes the oxidation of choline to betaine aldehyde and betaine aldehyde to glycine betaine at the same rate. The chain is Oxygen-dependent choline dehydrogenase from Yersinia pseudotuberculosis serotype O:1b (strain IP 31758).